Here is a 430-residue protein sequence, read N- to C-terminus: tRNA(Ile)-lysidine synthase (430 aa).

21-26 (SGGLDS) is a binding site for ATP.

The protein belongs to the tRNA(Ile)-lysidine synthase family.

The protein resides in the cytoplasm. The enzyme catalyses cytidine(34) in tRNA(Ile2) + L-lysine + ATP = lysidine(34) in tRNA(Ile2) + AMP + diphosphate + H(+). Ligates lysine onto the cytidine present at position 34 of the AUA codon-specific tRNA(Ile) that contains the anticodon CAU, in an ATP-dependent manner. Cytidine is converted to lysidine, thus changing the amino acid specificity of the tRNA from methionine to isoleucine. This chain is tRNA(Ile)-lysidine synthase, found in Salmonella newport (strain SL254).